The sequence spans 707 residues: Acyl-CoA ligase 891, peroxisomal (707 aa).

259–270 provides a ligand contact to ATP; the sequence is INYTSGTTGPPK. The interval 525-549 is fatty acid-binding; it reads DGWFRTGDVCTIDEKGRFIIIDRRK. Positions 705-707 match the Peroxisome targeting signal motif; sequence AKL.

The protein belongs to the ATP-dependent AMP-binding enzyme family.

It localises to the peroxisome matrix. It carries out the reaction (4E,8E)-10-(4-hydroxy-6-methoxy-7-methyl-3-oxo-1,3-dihydro-2-benzofuran-5-yl)-4,8-dimethyldeca-4,8-dienoate + ATP + CoA = (4E,8E)-10-(4-hydroxy-6-methoxy-7-methyl-3-oxo-1,3-dihydro-2-benzofuran-5-yl)-4,8-dimethyldeca-4,8-dienoyl-CoA + AMP + diphosphate. The protein operates within secondary metabolite biosynthesis; terpenoid biosynthesis. In terms of biological role, acyl-CoA ligase involved in the biosynthesis of mycophenolic acid (MPA), the first isolated antibiotic natural product in the world obtained from a culture of Penicillium brevicompactum in 1893. The peroxisomal acyl-CoA ligase 891 converts the intermediate MFDHMP-3C into MFDHMP-3C-CoA which impairs its diffusion from the peroxisome. The first step of the pathway is the synthesis of 5-methylorsellinic acid (5MOA) by the cytosolic polyketide synthase mpaC. 5MOA is then converted to the phthalide compound 5,7-dihydroxy-4,6-dimethylphthalide (DHMP) by the endoplasmic reticulum-bound cytochrome P450 monooxygenase mpaDE. MpaDE first catalyzes hydroxylation of 5-MOA to 4,6-dihydroxy-2-(hydroxymethyl)-3-methylbenzoic acid (DHMB). MpaDE then acts as a lactone synthase that catalyzes the ring closure to convert DHMB into DHMP. The next step is the prenylation of DHMP by the Golgi apparatus-associated prenyltransferase mpaA to yield farnesyl-DHMP (FDHMP). The ER-bound oxygenase mpaB then mediates the oxidative cleavage the C19-C20 double bond in FDHMP to yield FDHMP-3C via a mycophenolic aldehyde intermediate. The O-methyltransferase mpaG catalyzes the methylation of FDHMP-3C to yield MFDHMP-3C. After the cytosolic methylation of FDHMP-3C, MFDHMP-3C enters into peroxisomes probably via free diffusion due to its low molecular weight. Upon a peroxisomal CoA ligation reaction, catalyzed by a beta-oxidation component enzyme acyl-CoA ligase ACL891, MFDHMP-3C-CoA would then be restricted to peroxisomes for the following beta-oxidation pathway steps. The peroxisomal beta-oxidation machinery than converts MFDHMP-3C-CoA into MPA_CoA, via a beta-oxidation chain-shortening process. Finally mpaH acts as a peroxisomal acyl-CoA hydrolase with high substrate specificity toward MPA-CoA to release the final product MPA. This chain is Acyl-CoA ligase 891, peroxisomal, found in Penicillium roqueforti (strain FM164).